The sequence spans 473 residues: Bifunctional protein HldE (473 aa).

Positions 1–318 are ribokinase; the sequence is MKLSMPRFDQ…RAIQREEGSE (318 aa). 194–197 provides a ligand contact to ATP; sequence NLSE. The active site involves Asp-263. A cytidylyltransferase region spans residues 343–473; sequence FTNGCFDILH…TAIVEKIRKN (131 aa).

This sequence in the N-terminal section; belongs to the carbohydrate kinase PfkB family. In the C-terminal section; belongs to the cytidylyltransferase family. In terms of assembly, homodimer.

It catalyses the reaction D-glycero-beta-D-manno-heptose 7-phosphate + ATP = D-glycero-beta-D-manno-heptose 1,7-bisphosphate + ADP + H(+). The enzyme catalyses D-glycero-beta-D-manno-heptose 1-phosphate + ATP + H(+) = ADP-D-glycero-beta-D-manno-heptose + diphosphate. Its pathway is nucleotide-sugar biosynthesis; ADP-L-glycero-beta-D-manno-heptose biosynthesis; ADP-L-glycero-beta-D-manno-heptose from D-glycero-beta-D-manno-heptose 7-phosphate: step 1/4. The protein operates within nucleotide-sugar biosynthesis; ADP-L-glycero-beta-D-manno-heptose biosynthesis; ADP-L-glycero-beta-D-manno-heptose from D-glycero-beta-D-manno-heptose 7-phosphate: step 3/4. Functionally, catalyzes the phosphorylation of D-glycero-D-manno-heptose 7-phosphate at the C-1 position to selectively form D-glycero-beta-D-manno-heptose-1,7-bisphosphate. In terms of biological role, catalyzes the ADP transfer from ATP to D-glycero-beta-D-manno-heptose 1-phosphate, yielding ADP-D-glycero-beta-D-manno-heptose. The chain is Bifunctional protein HldE from Pseudomonas putida (strain ATCC 47054 / DSM 6125 / CFBP 8728 / NCIMB 11950 / KT2440).